Consider the following 341-residue polypeptide: tRNA N6-adenosine threonylcarbamoyltransferase (341 aa).

The Fe cation site is built by His-111 and His-115. Substrate-binding positions include 134-138, Asp-167, Gly-180, and Asn-276; that span reads LVSGG. Asp-304 lines the Fe cation pocket.

Belongs to the KAE1 / TsaD family. The cofactor is Fe(2+).

The protein localises to the cytoplasm. It carries out the reaction L-threonylcarbamoyladenylate + adenosine(37) in tRNA = N(6)-L-threonylcarbamoyladenosine(37) in tRNA + AMP + H(+). In terms of biological role, required for the formation of a threonylcarbamoyl group on adenosine at position 37 (t(6)A37) in tRNAs that read codons beginning with adenine. Is involved in the transfer of the threonylcarbamoyl moiety of threonylcarbamoyl-AMP (TC-AMP) to the N6 group of A37, together with TsaE and TsaB. TsaD likely plays a direct catalytic role in this reaction. The chain is tRNA N6-adenosine threonylcarbamoyltransferase from Pseudomonas entomophila (strain L48).